Here is a 205-residue protein sequence, read N- to C-terminus: MEFFWASLLGLCCSLAAANRHTVFWNSSNPKFWNEDYTVHVRIDDYLDIICPHYEDNSVPDAAMEQYTLYLVEHEQYQLCQPQPKDHARWFCKSPKAKHGPEKLSEKFHRFTGFTLSKDFKEGHSYYYISKPIHHQEDRCLRLKVMIAGKITHSPQAHPNAQEKRLPADDPEVQVLHSIGHSAAPRLFPLAWAVLLLPFLLLQIP.

The N-terminal stretch at 1 to 18 (MEFFWASLLGLCCSLAAA) is a signal peptide. Positions 19 to 151 (NRHTVFWNSS…RLKVMIAGKI (133 aa)) constitute an Ephrin RBD domain. N26 carries an N-linked (GlcNAc...) asparagine glycan. 2 disulfides stabilise this stretch: C51–C92 and C80–C140. A lipid anchor (GPI-anchor amidated serine) is attached at S182. Residues 183 to 205 (AAPRLFPLAWAVLLLPFLLLQIP) constitute a propeptide, removed in mature form.

This sequence belongs to the ephrin family. In terms of assembly, monomer. Homodimer. Forms heterodimers with EPHA2. Binds to the receptor tyrosine kinases EPHA2, EPHA3, EPHA4, EPHA5, EPHA6 and EPHA7. Also binds with low affinity to EPHA1. Post-translationally, undergoes proteolysis by a metalloprotease to give rise to a soluble monomeric form. In terms of processing, N-Glycosylation is required for binding to EPHA2 receptor and inducing its internalization.

Its subcellular location is the cell membrane. The protein localises to the secreted. Its function is as follows. Cell surface GPI-bound ligand for Eph receptors, a family of receptor tyrosine kinases which are crucial for migration, repulsion and adhesion during neuronal, vascular and epithelial development. Binds promiscuously Eph receptors residing on adjacent cells, leading to contact-dependent bidirectional signaling into neighboring cells. Plays an important role in angiogenesis and tumor neovascularization. The recruitment of VAV2, VAV3 and PI3-kinase p85 subunit by phosphorylated EPHA2 is critical for EFNA1-induced RAC1 GTPase activation and vascular endothelial cell migration and assembly. Exerts anti-oncogenic effects in tumor cells through activation and down-regulation of EPHA2. Activates EPHA2 by inducing tyrosine phosphorylation which leads to its internalization and degradation. Acts as a negative regulator in the tumorigenesis of gliomas by down-regulating EPHA2 and FAK. Can evoke collapse of embryonic neuronal growth cone and regulates dendritic spine morphogenesis. This Bos taurus (Bovine) protein is Ephrin-A1 (EFNA1).